Reading from the N-terminus, the 347-residue chain is Ribosomal RNA small subunit methyltransferase C (347 aa).

It belongs to the methyltransferase superfamily. RsmC family. In terms of assembly, monomer.

The protein localises to the cytoplasm. The catalysed reaction is guanosine(1207) in 16S rRNA + S-adenosyl-L-methionine = N(2)-methylguanosine(1207) in 16S rRNA + S-adenosyl-L-homocysteine + H(+). Functionally, specifically methylates the guanine in position 1207 of 16S rRNA in the 30S particle. The protein is Ribosomal RNA small subunit methyltransferase C of Yersinia enterocolitica serotype O:8 / biotype 1B (strain NCTC 13174 / 8081).